A 117-amino-acid chain; its full sequence is Cuticle protein CP1246 (117 aa).

4 consecutive repeat copies span residues 1–17 (NYGESGIVYPDGRLVQF), 26–43 (AEIGEAGVVMHDGTHVQF), 67–84 (QSYGYSGIIMPDGNNRQF), and 93–110 (VLVGPSGAVTADGKNVQF).

As to expression, calcified shell.

The chain is Cuticle protein CP1246 from Cancer pagurus (Rock crab).